The primary structure comprises 603 residues: MGRKWTYCVVYAIIQIQFFRGAWEELFNAGDNNVYALPGSDVNLTCQTMEKDLMVQMQWSKVTDEIDMIVVYHPQYGFHYMQGVACESRVAAVETLKDATKWTLNLRNISSSLSGKYECSFTMYPTGTKTIVYNLIVEPYTQDEHNRTIEIETNRTLEIPCFQNTSSEISPRFTFSWLVEKDGVEDVLFTYDYHVSNSTAFKGRVGLGADYGLRLSPVQIQDDGRTFSCFLRISPLKVWKTSTTVKVFAKPEILMTVENTTMDVLGERVFTCLLKNVFPKASITWLIDGRLFQGNEEGIYITNEEKNSSSGFWELKSVLTRMHNRTSQSNNMTVWCMALSPGPGNKMWNTSSQPITFSLDSGTAPTKRLPNVTGSTLGAQTFPDAEVSPTRYLATSSMTIVDENVLTPDPTPQTSNSSMTTKDVNYSQPSSGTDAKNSSRAASSSDGGSRPFPSTSPPKWLSLPHTSTGPQEPDSAVSWIPTDAYTSGSSDASLTSHDVIIRTTKEFPDVLTTANGTTKIKHGHVTGITVNKPRDGMSWPVAVATLLFFCILLFGLGVRKWCQYQKEIMERPPPFKPPPPPIKYMCIQEPTGRGMPCHEMEVL.

An N-terminal signal peptide occupies residues 1–21; sequence MGRKWTYCVVYAIIQIQFFRG. The Extracellular portion of the chain corresponds to 22 to 537; that stretch reads AWEELFNAGD…ITVNKPRDGM (516 aa). Ig-like V-type domains follow at residues 24–132 and 139–245; these read EELF…KTIV and PYTQ…STTV. N-linked (GlcNAc...) asparagine glycans are attached at residues asparagine 43, asparagine 108, asparagine 146, asparagine 154, asparagine 164, asparagine 197, asparagine 259, asparagine 307, asparagine 324, asparagine 331, asparagine 349, asparagine 371, asparagine 416, asparagine 425, and asparagine 437. Cysteine 46 and cysteine 119 are disulfide-bonded. A disulfide bond links cysteine 161 and cysteine 229. Positions 251–356 constitute an Ig-like C2-type domain; the sequence is PEILMTVENT…MWNTSSQPIT (106 aa). Cysteine 272 and cysteine 336 form a disulfide bridge. Disordered stretches follow at residues 359-383 and 403-482; these read LDSG…QTFP and ENVL…WIPT. Over residues 412 to 436 the composition is skewed to polar residues; that stretch reads PQTSNSSMTTKDVNYSQPSSGTDAK. Residues 438-450 are compositionally biased toward low complexity; it reads SSRAASSSDGGSR. A glycan (N-linked (GlcNAc...) asparagine) is linked at asparagine 515. The helical transmembrane segment at 538-558 threads the bilayer; sequence SWPVAVATLLFFCILLFGLGV. At 559-603 the chain is on the cytoplasmic side; it reads RKWCQYQKEIMERPPPFKPPPPPIKYMCIQEPTGRGMPCHEMEVL.

As to quaternary structure, homodimer; disulfide-linked. Interacts with PVR.

It is found in the membrane. May be involved in adhesive interactions of activated T and NK cells during the late phase of the immune response. Promotes NK cell-target adhesion by interacting with PVR present on target cells. May function at a time after T and NK cells have penetrated the endothelium using integrins and selectins, when they are actively engaging diseased cells and moving within areas of inflammation. This is T-cell surface protein tactile (Cd96) from Rattus norvegicus (Rat).